A 338-amino-acid polypeptide reads, in one-letter code: Tetraacyldisaccharide 4'-kinase (338 aa).

Residue 63-70 participates in ATP binding; it reads TVGGSGKT.

The protein belongs to the LpxK family.

It catalyses the reaction a lipid A disaccharide + ATP = a lipid IVA + ADP + H(+). The protein operates within glycolipid biosynthesis; lipid IV(A) biosynthesis; lipid IV(A) from (3R)-3-hydroxytetradecanoyl-[acyl-carrier-protein] and UDP-N-acetyl-alpha-D-glucosamine: step 6/6. Its function is as follows. Transfers the gamma-phosphate of ATP to the 4'-position of a tetraacyldisaccharide 1-phosphate intermediate (termed DS-1-P) to form tetraacyldisaccharide 1,4'-bis-phosphate (lipid IVA). The chain is Tetraacyldisaccharide 4'-kinase from Shewanella loihica (strain ATCC BAA-1088 / PV-4).